A 260-amino-acid polypeptide reads, in one-letter code: Peptidase inhibitor 15-A (260 aa).

A signal peptide spans 1–21 (MNENRLAIDILLLCISCGASA). The propeptide occupies 22–62 (LAGFSPTASSSLPATNLTDIGFAPPKYLTEAANIPKTRRKR). N-linked (GlcNAc...) asparagine glycans are attached at residues Asn-37 and Asn-126. In terms of domain architecture, SCP spans 73–213 (LDYHNKVRGK…KRATYLVCNY (141 aa)).

It belongs to the CRISP family.

It is found in the secreted. In terms of biological role, serine protease inhibitor which displays weak inhibitory activity against trypsin. May play a role in facial patterning during embryonic development. The sequence is that of Peptidase inhibitor 15-A (pi15a) from Danio rerio (Zebrafish).